Consider the following 900-residue polypeptide: MRLFVSDGVPGCLPVLAAAGRARGRAEVLISTVGPEDCVVPFLTRPKVPVLQLDSGNYLFSTSAICRYFFLLSGWEQDDLTNQWLEWEATELQPALSAALYYLVVQGKKGEDVLGSVRRALTHIDHSLSRQNCPFLAGETESLADIVLWGALYPLLQDPAYLPEELSALHSWFQTLSTQEPCQRAAETVLKQQGVLALRPYLQKQPQPSPAEGRAVTNEPEEEELATLSEEEIAMAVTAWEKGLESLPPLRPQQNPVLPVAGERNVLITSALPYVNNVPHLGNIIGCVLSADVFARYSRLRQWNTLYLCGTDEYGTATETKALEEGLTPQEICDKYHIIHADIYRWFNISFDIFGRTTTPQQTKITQDIFQQLLKRGFVLQDTVEQLRCEHCARFLADRFVEGVCPFCGYEEARGDQCDKCGKLINAVELKKPQCKVCRSCPVVQSSQHLFLDLPKLEKRLEEWLGRTLPGSDWTPNAQFITRSWLRDGLKPRCITRDLKWGTPVPLEGFEDKVFYVWFDATIGYLSITANYTDQWERWWKNPEQVDLYQFMAKDNVPFHSLVFPCSALGAEDNYTLVSHLIATEYLNYEDGKFSKSRGVGVFGDMAQDTGIPADIWRFYLLYIRPEGQDSAFSWTDLLLKNNSELLNNLGNFINRAGMFVSKFFGGYVPEMVLTPDDQRLLAHVTLELQHYHQLLEKVRIRDALRSILTISRHGNQYIQVNEPWKRIKGSEADRQRAGTVTGLAVNIAALLSVMLQPYMPTVSATIQAQLQLPPPACSILLTNFLCTLPAGHQIGTVSPLFQKLENDQIESLRQRFGGGQAKTSPKPAVVETVTTAKPQQIQALMDEVTKQGNIVRELKAQKADKNEVAAEVAKLLDLKKQLAVAEGKPPEAPKGKKKK.

In terms of domain architecture, GST C-terminal spans Gly74–Leu198. Residues Pro273–Asn283 carry the 'HIGH' region motif. The 'KMSKS' region motif lies at Lys593 to Ser597. ATP is bound at residue Lys596. Ser825 carries the phosphoserine modification. A Phosphothreonine modification is found at Thr835. Residues Gln841–Lys897 enclose the WHEP-TRS domain.

The protein belongs to the class-I aminoacyl-tRNA synthetase family. In terms of assembly, monomer. Part of a multisubunit complex that groups tRNA ligases for Arg (RARS1), Asp (DARS1), Gln (QARS1), Ile (IARS1), Leu (LARS1), Lys (KARS1), Met (MARS1) the bifunctional ligase for Glu and Pro (EPRS1) and the auxiliary subunits AIMP1/p43, AIMP2/p38 and EEF1E1/p18. Forms a linear complex that contains MARS1, EEF1E1, EPRS1 and AIMP2 that is at the core of the multisubunit complex.

It localises to the cytoplasm. Its subcellular location is the cytosol. It is found in the nucleus. The protein localises to the nucleolus. The catalysed reaction is tRNA(Met) + L-methionine + ATP = L-methionyl-tRNA(Met) + AMP + diphosphate. Its activity is regulated as follows. Enzyme activity is increased by spermidine, EEF1A1, and when the Mg(2+) concentration is increased from 5 mM to 13 mM (in vitro), possibly by promoting the dissociation of the complex between the enzyme and its product. Catalyzes the specific attachment of an amino acid to its cognate tRNA in a 2 step reaction: the amino acid (AA) is first activated by ATP to form AA-AMP and then transferred to the acceptor end of the tRNA. Plays a role in the synthesis of ribosomal RNA in the nucleolus. The protein is Methionine--tRNA ligase, cytoplasmic of Homo sapiens (Human).